The following is a 144-amino-acid chain: Large ribosomal subunit protein uL14 (144 aa).

Belongs to the universal ribosomal protein uL14 family. Part of the 50S ribosomal subunit. Forms a cluster with proteins L3 and L24e, part of which may contact the 16S rRNA in 2 intersubunit bridges.

Binds to 23S rRNA. Forms part of two intersubunit bridges in the 70S ribosome. In Pyrobaculum aerophilum (strain ATCC 51768 / DSM 7523 / JCM 9630 / CIP 104966 / NBRC 100827 / IM2), this protein is Large ribosomal subunit protein uL14.